The primary structure comprises 456 residues: Bifunctional protein GlmU (456 aa).

Positions 1-229 (MYNCAIILAA…FEETMGVNSR (229 aa)) are pyrophosphorylase. Residues 8–11 (LAAG), Lys22, Gln73, and 78–79 (GT) contribute to the UDP-N-acetyl-alpha-D-glucosamine site. Asp103 is a Mg(2+) binding site. Residues Gly140, Glu155, Asn170, and Asn227 each coordinate UDP-N-acetyl-alpha-D-glucosamine. A Mg(2+)-binding site is contributed by Asn227. Residues 230-250 (VQLAEAEKIMRNRINKIHMEN) are linker. An N-acetyltransferase region spans residues 251–456 (GVTLIDHNNT…SWVYKKGLKK (206 aa)). Residues Arg332 and Lys350 each contribute to the UDP-N-acetyl-alpha-D-glucosamine site. The Proton acceptor role is filled by His362. UDP-N-acetyl-alpha-D-glucosamine-binding residues include Tyr365 and Asn376. Acetyl-CoA-binding positions include 385–386 (NY), Ala422, and Arg439.

It in the N-terminal section; belongs to the N-acetylglucosamine-1-phosphate uridyltransferase family. This sequence in the C-terminal section; belongs to the transferase hexapeptide repeat family. As to quaternary structure, homotrimer. It depends on Mg(2+) as a cofactor.

The protein resides in the cytoplasm. The enzyme catalyses alpha-D-glucosamine 1-phosphate + acetyl-CoA = N-acetyl-alpha-D-glucosamine 1-phosphate + CoA + H(+). The catalysed reaction is N-acetyl-alpha-D-glucosamine 1-phosphate + UTP + H(+) = UDP-N-acetyl-alpha-D-glucosamine + diphosphate. Its pathway is nucleotide-sugar biosynthesis; UDP-N-acetyl-alpha-D-glucosamine biosynthesis; N-acetyl-alpha-D-glucosamine 1-phosphate from alpha-D-glucosamine 6-phosphate (route II): step 2/2. The protein operates within nucleotide-sugar biosynthesis; UDP-N-acetyl-alpha-D-glucosamine biosynthesis; UDP-N-acetyl-alpha-D-glucosamine from N-acetyl-alpha-D-glucosamine 1-phosphate: step 1/1. It functions in the pathway bacterial outer membrane biogenesis; LPS lipid A biosynthesis. Its function is as follows. Catalyzes the last two sequential reactions in the de novo biosynthetic pathway for UDP-N-acetylglucosamine (UDP-GlcNAc). The C-terminal domain catalyzes the transfer of acetyl group from acetyl coenzyme A to glucosamine-1-phosphate (GlcN-1-P) to produce N-acetylglucosamine-1-phosphate (GlcNAc-1-P), which is converted into UDP-GlcNAc by the transfer of uridine 5-monophosphate (from uridine 5-triphosphate), a reaction catalyzed by the N-terminal domain. This Clostridium kluyveri (strain NBRC 12016) protein is Bifunctional protein GlmU.